Reading from the N-terminus, the 175-residue chain is Large ribosomal subunit protein uL10 (175 aa).

The protein belongs to the universal ribosomal protein uL10 family. As to quaternary structure, part of the ribosomal stalk of the 50S ribosomal subunit. The N-terminus interacts with L11 and the large rRNA to form the base of the stalk. The C-terminus forms an elongated spine to which L12 dimers bind in a sequential fashion forming a multimeric L10(L12)X complex.

In terms of biological role, forms part of the ribosomal stalk, playing a central role in the interaction of the ribosome with GTP-bound translation factors. The sequence is that of Large ribosomal subunit protein uL10 from Methylobacterium sp. (strain 4-46).